The chain runs to 498 residues: ATP synthase subunit beta, chloroplastic (498 aa).

Residue 172–179 (GGAGVGKT) coordinates ATP.

This sequence belongs to the ATPase alpha/beta chains family. F-type ATPases have 2 components, CF(1) - the catalytic core - and CF(0) - the membrane proton channel. CF(1) has five subunits: alpha(3), beta(3), gamma(1), delta(1), epsilon(1). CF(0) has four main subunits: a(1), b(1), b'(1) and c(9-12).

The protein resides in the plastid. It localises to the chloroplast thylakoid membrane. The enzyme catalyses ATP + H2O + 4 H(+)(in) = ADP + phosphate + 5 H(+)(out). Functionally, produces ATP from ADP in the presence of a proton gradient across the membrane. The catalytic sites are hosted primarily by the beta subunits. The polypeptide is ATP synthase subunit beta, chloroplastic (Buxus microphylla (Littleleaf boxwood)).